A 1046-amino-acid chain; its full sequence is Translation initiation factor IF-2 (1046 aa).

The segment at 49-450 (ALQQGNGGKA…GVMLPRGNGQ (402 aa)) is disordered. Low complexity-rich tracts occupy residues 57 to 80 (KAAP…ARPA) and 89 to 106 (PAAA…AAPA). A compositionally biased stretch (pro residues) spans 107 to 128 (APGPRPGPKPAPRPAPAAPAPA). A compositionally biased stretch (low complexity) spans 129-169 (APEFTAPPSAPAAPAAAASGPRPGARPGAPKPGGARPATPG). A compositionally biased stretch (basic and acidic residues) spans 177–194 (RGERTDRGDRGDRGDRQG). Positions 195–214 (AARPGGQAPRPGARPAGPRP) are enriched in low complexity. Gly residues-rich tracts occupy residues 239–248 (PRPGGAGAPG) and 266–280 (GGPG…GPGG). The span at 302–318 (GNRPNPGMMPQRPAAGP) shows a compositional bias: low complexity. Gly residues predominate over residues 319 to 414 (RPGGGGPGGR…GTQGAFGRPG (96 aa)). Over residues 418–427 (RRGRKSKRQR) the composition is skewed to basic residues. Positions 539–711 (ARPPVVTVMG…VVLTADASLD (173 aa)) constitute a tr-type G domain. A G1 region spans residues 548 to 555 (GHVDHGKT). 548 to 555 (GHVDHGKT) provides a ligand contact to GTP. Residues 573-577 (GITQH) form a G2 region. Positions 598–601 (DTPG) are G3. GTP contacts are provided by residues 598–602 (DTPGH) and 652–655 (NKID). The segment at 652 to 655 (NKID) is G4. Positions 688–690 (SAK) are G5.

Belongs to the TRAFAC class translation factor GTPase superfamily. Classic translation factor GTPase family. IF-2 subfamily.

The protein resides in the cytoplasm. In terms of biological role, one of the essential components for the initiation of protein synthesis. Protects formylmethionyl-tRNA from spontaneous hydrolysis and promotes its binding to the 30S ribosomal subunits. Also involved in the hydrolysis of GTP during the formation of the 70S ribosomal complex. This is Translation initiation factor IF-2 from Streptomyces avermitilis (strain ATCC 31267 / DSM 46492 / JCM 5070 / NBRC 14893 / NCIMB 12804 / NRRL 8165 / MA-4680).